Reading from the N-terminus, the 928-residue chain is cGMP-dependent 3',5'-cyclic phosphodiesterase (928 aa).

Ser109 bears the Phosphoserine mark. A disordered region spans residues 188 to 210 (RRPEAVQNTSADPSEDQKDEKGY). GAF domains are found at residues 228–365 (DATS…GTVL) and 397–536 (DVSV…GISI). 5 residues coordinate 3',5'-cyclic GMP: Ser419, Asp434, Ile453, Tyr476, and Thr487. One can recognise a PDEase domain in the interval 566 to 890 (SDDEYTKLLH…EHWTKVSHKF (325 aa)). His644 (proton donor) is an active-site residue. The Zn(2+) site is built by His648, His684, Asp685, and Asp796. Position 685 (Asp685) interacts with Mg(2+).

It belongs to the cyclic nucleotide phosphodiesterase family. PDE2 subfamily. As to quaternary structure, homodimer. Requires Zn(2+) as cofactor. Mg(2+) serves as cofactor. Expressed in brain and liver.

The protein localises to the cell membrane. The protein resides in the cytoplasm. Its subcellular location is the mitochondrion matrix. It localises to the mitochondrion inner membrane. It is found in the mitochondrion outer membrane. It carries out the reaction a nucleoside 3',5'-cyclic phosphate + H2O = a nucleoside 5'-phosphate + H(+). The enzyme catalyses 3',5'-cyclic GMP + H2O = GMP + H(+). It catalyses the reaction 3',5'-cyclic AMP + H2O = AMP + H(+). With respect to regulation, the 3',5'-cyclic-AMP phosphodiesterase activity is stimulated by 3',5'-cyclic GMP. Specifically inhibited by Bay 60-7550. When repressed, protected from ionomycin- but not staurosporin-induced cell death. Its function is as follows. cGMP-activated cyclic nucleotide phosphodiesterase with a dual-specificity for the second messengers cAMP and cGMP, which are key regulators of many important physiological processes. Has a higher efficiency with cGMP compared to cAMP. Plays a role in cell growth and migration. Functionally, regulates mitochondrial cAMP levels and respiration. Involved in the regulation of mitochondria morphology/dynamics and apoptotic cell death via local modulation of cAMP/PKA signaling in the mitochondrion, including the monitoring of local cAMP levels at the outer mitochondrial membrane and of PKA-dependent phosphorylation of Dnm1l. The polypeptide is cGMP-dependent 3',5'-cyclic phosphodiesterase (Rattus norvegicus (Rat)).